Consider the following 413-residue polypeptide: S-adenosylmethionine synthase (413 aa).

His15 serves as a coordination point for ATP. Residue Asp17 coordinates Mg(2+). Glu43 provides a ligand contact to K(+). Residues Glu56 and Gln100 each contribute to the L-methionine site. The interval 100–110 (QSPDISQGVNE) is flexible loop. Residues 171-173 (DGK), 248-249 (KF), Asp257, 263-264 (RK), Ala280, and Lys284 each bind ATP. Asp257 contributes to the L-methionine binding site. Position 288 (Lys288) interacts with L-methionine.

Belongs to the AdoMet synthase family. Homotetramer; dimer of dimers. The cofactor is Mg(2+). K(+) serves as cofactor.

The protein resides in the cytoplasm. It catalyses the reaction L-methionine + ATP + H2O = S-adenosyl-L-methionine + phosphate + diphosphate. The protein operates within amino-acid biosynthesis; S-adenosyl-L-methionine biosynthesis; S-adenosyl-L-methionine from L-methionine: step 1/1. In terms of biological role, catalyzes the formation of S-adenosylmethionine (AdoMet) from methionine and ATP. The overall synthetic reaction is composed of two sequential steps, AdoMet formation and the subsequent tripolyphosphate hydrolysis which occurs prior to release of AdoMet from the enzyme. The polypeptide is S-adenosylmethionine synthase (Prochlorococcus marinus subsp. pastoris (strain CCMP1986 / NIES-2087 / MED4)).